The primary structure comprises 809 residues: Sucrose synthase 4 (809 aa).

Residues 275–753 (MIFNVVVVSP…GLQRIYEKYT (479 aa)) are GT-B glycosyltransferase.

Belongs to the glycosyltransferase 1 family. Plant sucrose synthase subfamily. As to expression, predominantly expressed in the leaf tissues and in caryopses.

The catalysed reaction is an NDP-alpha-D-glucose + D-fructose = a ribonucleoside 5'-diphosphate + sucrose + H(+). Its function is as follows. Sucrose-cleaving enzyme that provides UDP-glucose and fructose for various metabolic pathways. In Oryza sativa subsp. japonica (Rice), this protein is Sucrose synthase 4 (SUS4).